Consider the following 304-residue polypeptide: D-alanine--D-alanine ligase (304 aa).

The ATP-grasp domain maps to 99–293 (KKILRYEGIE…YSKLLDMIIE (195 aa)). Residue 126–181 (LDKLGFPLVVKPNSGGSSVGVKIVYDKDELISMLETVFEWDSEVVIEKYIKGEEIT) participates in ATP binding. The Mg(2+) site is built by Asp248, Glu260, and Asn262.

It belongs to the D-alanine--D-alanine ligase family. The cofactor is Mg(2+). Mn(2+) serves as cofactor.

It localises to the cytoplasm. It catalyses the reaction 2 D-alanine + ATP = D-alanyl-D-alanine + ADP + phosphate + H(+). The protein operates within cell wall biogenesis; peptidoglycan biosynthesis. Cell wall formation. The protein is D-alanine--D-alanine ligase of Bacillus anthracis (strain A0248).